We begin with the raw amino-acid sequence, 180 residues long: NAD(P)H-quinone oxidoreductase subunit I, chloroplastic (180 aa).

2 consecutive 4Fe-4S ferredoxin-type domains span residues 55 to 84 (GRIHFEFDKCIACEVCVRVCPIDLPLVDWR) and 95 to 124 (LNYSIDFGVCIFCGNCVEYCPTNCLSMTEE). Positions 64, 67, 70, 74, 104, 107, 110, and 114 each coordinate [4Fe-4S] cluster.

This sequence belongs to the complex I 23 kDa subunit family. NDH is composed of at least 16 different subunits, 5 of which are encoded in the nucleus. [4Fe-4S] cluster is required as a cofactor.

It localises to the plastid. Its subcellular location is the chloroplast thylakoid membrane. The catalysed reaction is a plastoquinone + NADH + (n+1) H(+)(in) = a plastoquinol + NAD(+) + n H(+)(out). The enzyme catalyses a plastoquinone + NADPH + (n+1) H(+)(in) = a plastoquinol + NADP(+) + n H(+)(out). NDH shuttles electrons from NAD(P)H:plastoquinone, via FMN and iron-sulfur (Fe-S) centers, to quinones in the photosynthetic chain and possibly in a chloroplast respiratory chain. The immediate electron acceptor for the enzyme in this species is believed to be plastoquinone. Couples the redox reaction to proton translocation, and thus conserves the redox energy in a proton gradient. The sequence is that of NAD(P)H-quinone oxidoreductase subunit I, chloroplastic from Zea mays (Maize).